The sequence spans 348 residues: Haptoglobin-related protein (348 aa).

A signal peptide (not cleaved) is located at residues 1-18; sequence MSDLGAVISLLLWGRQLF. The region spanning 34-87 is the Sushi domain; the sequence is FPKPPEIANGYVEHLFRYQCKNYYRLRTEGDGVYTLNDKKQWINKAVGDKLPEC. Positions 104 to 346 constitute a Peptidase S1 domain; it reads ILGGHLDAKG…IQHWVQKTIA (243 aa). 2 cysteine pairs are disulfide-bonded: Cys-251-Cys-282 and Cys-293-Cys-323.

This sequence belongs to the peptidase S1 family. As to expression, in adult liver the amount of HPR mRNA is at the lower limit of detection, therefore the extent of its expression is at most less than 1000-fold that of the HP1F gene. No HPR mRNA can be detected in fetal liver. Expressed in Hep-G2 and leukemia MOLT-4 cell lines.

The protein localises to the secreted. Primate-specific plasma protein associated with apolipoprotein L-I (apoL-I)-containing high-density lipoprotein (HDL). This HDL particle, termed trypanosome lytic factor-1 (TLF-1), mediates human innate immune protection against many species of African trypanosomes. Binds hemoglobin with high affinity and may contribute to the clearance of cell-free hemoglobin to allow hepatic recycling of heme iron. The protein is Haptoglobin-related protein (HPR) of Homo sapiens (Human).